Reading from the N-terminus, the 130-residue chain is Small ribosomal subunit protein uS8 (130 aa).

This sequence belongs to the universal ribosomal protein uS8 family. In terms of assembly, part of the 30S ribosomal subunit.

One of the primary rRNA binding proteins, it binds directly to 16S rRNA central domain where it helps coordinate assembly of the platform of the 30S subunit. This is Small ribosomal subunit protein uS8 from Pyrococcus abyssi (strain GE5 / Orsay).